The sequence spans 675 residues: MADRLPTSTSSGRRRRDGDASIGEFVIGGEIGKGSFAQVYSGHHKNSKAAVAIKSVEMGRLNNKLRENLYGEIQILKTLRHPHIVALHDCVESATHINLVMEYCELGDLSFFIKKRDRHGTNAATEDMARKYPVTPGSGLHEVVTRHFLQQLASALKFLREKNYVHRDVKPQNLLLLPSPGFRKENSRPILTASNDSLIPNAGLASLPMLKLADFGFARVLPSTSLADTLCGSPLYMAPEILRYERYDAKADLWSVGTVLYEMITGRPPFRARNHVELLRKIEATEDKVKYPKDAVVSKDLVKLIGKLLTRNPVERMRFEDFFNDPVVVGPIPGVVEDDIPKVEQKPSRDLRSLEADPQREQSELAKSPRERPLRSPQLPSPDEVRVPQANVSARTGQSPGREIGEGLGIRRPPMPQPSTSAPSRPHRLSNASLNRPPIRASASPPTSYLNERKLRPVTERSMTEQDKAAQDVAFERDYVVVEKKHVEVNAFADEMAANPRLTSLSPKNGQMVRRATQQGPPTSTTGAGRMQPSSAVQIAQGKGRPGHDHPCVSLASRSLNTSSAARAPLRPCTTRSPRIRHRHPLLLLDSSVTADRAHHLTKMHGSSSSSKTSHIVVIVYMALPKSSLSNFSLWHLPWITPWVAPLPTKSMRMVLLSRQRWLCLRRLSCFTSRL.

One can recognise a Protein kinase domain in the interval 25–328; it reads FVIGGEIGKG…FEDFFNDPVV (304 aa). ATP-binding positions include 31-39 and K54; that span reads IGKGSFAQV. D168 functions as the Proton acceptor in the catalytic mechanism. Over residues 339–374 the composition is skewed to basic and acidic residues; sequence DIPKVEQKPSRDLRSLEADPQREQSELAKSPRERPL. Disordered stretches follow at residues 339 to 455 and 501 to 577; these read DIPK…ERKL and RLTS…TTRS. Polar residues-rich tracts occupy residues 390 to 399, 516 to 538, and 556 to 565; these read ANVSARTGQS, ATQQ…SAVQ, and ASRSLNTSSA.

Belongs to the protein kinase superfamily. Ser/Thr protein kinase family. APG1/unc-51/ULK1 subfamily. As to quaternary structure, homodimer. Forms a ternary complex with ATG13 and ATG17.

Its subcellular location is the cytoplasm. The protein resides in the preautophagosomal structure membrane. It carries out the reaction L-seryl-[protein] + ATP = O-phospho-L-seryl-[protein] + ADP + H(+). The catalysed reaction is L-threonyl-[protein] + ATP = O-phospho-L-threonyl-[protein] + ADP + H(+). Serine/threonine protein kinase involved in the cytoplasm to vacuole transport (Cvt) and found to be essential in autophagy, where it is required for the formation of autophagosomes. Involved in the clearance of protein aggregates which cannot be efficiently cleared by the proteasome. Required for selective autophagic degradation of the nucleus (nucleophagy) as well as for mitophagy which contributes to regulate mitochondrial quantity and quality by eliminating the mitochondria to a basal level to fulfill cellular energy requirements and preventing excess ROS production. Also involved in endoplasmic reticulum-specific autophagic process, in selective removal of ER-associated degradation (ERAD) substrates. Plays a key role in ATG9 and ATG23 cycling through the pre-autophagosomal structure and is necessary to promote ATG18 binding to ATG9 through phosphorylation of ATG9. Catalyzes phosphorylation of ATG4, decreasing the interaction between ATG4 and ATG8 and impairing deconjugation of PE-conjugated forms of ATG8. In Colletotrichum lindemuthianum (Bean anthracnose fungus), this protein is Serine/threonine-protein kinase ATG1.